A 331-amino-acid chain; its full sequence is MIKKYYDADCNLGLLDGKTIAIMGYGSQGHAHAQNLKDSGMNVIVGLRKDSANCKKAEEAGFKVMEVEEAAKLADIVMMLVPDEVSADIYNTQVAPHMKEGNVLMYAHGFNIHFQFVVPAKNIDVIMVAPKGPGHTVRSQYLEGRGVPSLIAVYQDFSGRAKDYALAYASGIGAGRAGILETTFREETETDLFGEQAVLCGGVTELMKAGFDTLVEAGYEPEMAYFECIHEMKLIVDLIYSGGFAMMRYSISNTAEYGDYRTGRRMITEETRKEMKKVLREIQDGTFASEFIQEFSAGRKAKFNATKKLESEHKLEKVGAELRKMMSWIKK.

A KARI N-terminal Rossmann domain is found at 2-182; sequence IKKYYDADCN…GAGRAGILET (181 aa). Residues 25–28, R48, and S51 each bind NADP(+); that span reads YGSQ. Residue H108 is part of the active site. Residue G134 coordinates NADP(+). The region spanning 183–329 is the KARI C-terminal knotted domain; it reads TFREETETDL…AELRKMMSWI (147 aa). Mg(2+) contacts are provided by D191, E195, E227, and E231. S252 provides a ligand contact to substrate.

It belongs to the ketol-acid reductoisomerase family. The cofactor is Mg(2+).

The catalysed reaction is (2R)-2,3-dihydroxy-3-methylbutanoate + NADP(+) = (2S)-2-acetolactate + NADPH + H(+). It carries out the reaction (2R,3R)-2,3-dihydroxy-3-methylpentanoate + NADP(+) = (S)-2-ethyl-2-hydroxy-3-oxobutanoate + NADPH + H(+). The protein operates within amino-acid biosynthesis; L-isoleucine biosynthesis; L-isoleucine from 2-oxobutanoate: step 2/4. It participates in amino-acid biosynthesis; L-valine biosynthesis; L-valine from pyruvate: step 2/4. Functionally, involved in the biosynthesis of branched-chain amino acids (BCAA). Catalyzes an alkyl-migration followed by a ketol-acid reduction of (S)-2-acetolactate (S2AL) to yield (R)-2,3-dihydroxy-isovalerate. In the isomerase reaction, S2AL is rearranged via a Mg-dependent methyl migration to produce 3-hydroxy-3-methyl-2-ketobutyrate (HMKB). In the reductase reaction, this 2-ketoacid undergoes a metal-dependent reduction by NADPH to yield (R)-2,3-dihydroxy-isovalerate. In Brachyspira hyodysenteriae (strain ATCC 49526 / WA1), this protein is Ketol-acid reductoisomerase (NADP(+)).